The following is a 543-amino-acid chain: Ribosomal protein arginine N-methyltransferase rmt3 (543 aa).

The C2H2-type zinc-finger motif lies at phenylalanine 58–histidine 81. The SAM-dependent MTase PRMT-type domain maps to aspartate 217 to asparagine 543. 6 residues coordinate S-adenosyl-L-homocysteine: arginine 239, glycine 263, aspartate 285, serine 287, isoleucine 313, and glutamate 314. Catalysis depends on residues glutamate 329 and glutamate 338.

Belongs to the class I-like SAM-binding methyltransferase superfamily. Protein arginine N-methyltransferase family. In terms of assembly, interacts with ef1a-c, rps2 and rps24. Note=Associates with the 40S ribosomal particle.

Its subcellular location is the cytoplasm. It is found in the cytosol. It catalyses the reaction L-arginyl-[protein] + S-adenosyl-L-methionine = N(omega)-methyl-L-arginyl-[protein] + S-adenosyl-L-homocysteine + H(+). It carries out the reaction L-arginyl-[protein] + 2 S-adenosyl-L-methionine = N(omega),N(omega)-dimethyl-L-arginyl-[protein] + 2 S-adenosyl-L-homocysteine + 2 H(+). In terms of biological role, methylates (mono and asymmetric dimethylation) the guanidino nitrogens of arginyl residues in ribosomal protein rps2. The protein is Ribosomal protein arginine N-methyltransferase rmt3 (rmt3) of Schizosaccharomyces pombe (strain 972 / ATCC 24843) (Fission yeast).